The following is a 200-amino-acid chain: Holliday junction branch migration complex subunit RuvA (200 aa).

Residues 1–65 are domain I; that stretch reads MYEYIKGTLT…ETEHVLYGFS (65 aa). The domain II stretch occupies residues 66-144; the sequence is SRAERECFRL…TLMPLYLEEP (79 aa). The segment at 145–149 is flexible linker; that stretch reads VVPSS. Residues 150 to 200 form a domain III region; it reads TANSSFKEGIGALMNLGFSRLAADRMMTEAVKELSEEASVAELLPIALRKS.

Belongs to the RuvA family. In terms of assembly, homotetramer. Forms an RuvA(8)-RuvB(12)-Holliday junction (HJ) complex. HJ DNA is sandwiched between 2 RuvA tetramers; dsDNA enters through RuvA and exits via RuvB. An RuvB hexamer assembles on each DNA strand where it exits the tetramer. Each RuvB hexamer is contacted by two RuvA subunits (via domain III) on 2 adjacent RuvB subunits; this complex drives branch migration. In the full resolvosome a probable DNA-RuvA(4)-RuvB(12)-RuvC(2) complex forms which resolves the HJ.

The protein localises to the cytoplasm. Functionally, the RuvA-RuvB-RuvC complex processes Holliday junction (HJ) DNA during genetic recombination and DNA repair, while the RuvA-RuvB complex plays an important role in the rescue of blocked DNA replication forks via replication fork reversal (RFR). RuvA specifically binds to HJ cruciform DNA, conferring on it an open structure. The RuvB hexamer acts as an ATP-dependent pump, pulling dsDNA into and through the RuvAB complex. HJ branch migration allows RuvC to scan DNA until it finds its consensus sequence, where it cleaves and resolves the cruciform DNA. The polypeptide is Holliday junction branch migration complex subunit RuvA (Chlamydia trachomatis serovar D (strain ATCC VR-885 / DSM 19411 / UW-3/Cx)).